Here is a 399-residue protein sequence, read N- to C-terminus: Digeranylgeranylglycerophospholipid reductase (399 aa).

Residues Gly-15, Glu-34, Cys-45, Ala-46, Gly-48, Arg-99, Ala-123, Asp-280, Gly-292, and Ile-293 each coordinate FAD.

It belongs to the geranylgeranyl reductase family. DGGGPL reductase subfamily. FAD serves as cofactor.

The catalysed reaction is a 2,3-bis-O-phytanyl-sn-glycerol 1-phospholipid + 8 oxidized 2[4Fe-4S]-[ferredoxin] = a 2,3-bis-O-(geranylgeranyl)-sn-glycerol 1-phospholipid + 8 reduced 2[4Fe-4S]-[ferredoxin] + 16 H(+). The enzyme catalyses 2,3-bis-O-(phytanyl)-sn-glycerol 1-phosphate + 8 oxidized 2[4Fe-4S]-[ferredoxin] = 2,3-bis-O-(geranylgeranyl)-sn-glycerol 1-phosphate + 8 reduced 2[4Fe-4S]-[ferredoxin] + 16 H(+). It catalyses the reaction a 2,3-bis-O-phytanyl-sn-glycerol 1-phospholipid + 8 A = a 2,3-bis-O-(geranylgeranyl)-sn-glycerol 1-phospholipid + 8 AH2. It carries out the reaction CDP-2,3-bis-O-(geranylgeranyl)-sn-glycerol + 8 AH2 = CDP-2,3-bis-O-(phytanyl)-sn-glycerol + 8 A. The catalysed reaction is archaetidylserine + 8 AH2 = 2,3-bis-O-phytanyl-sn-glycero-3-phospho-L-serine + 8 A. The protein operates within membrane lipid metabolism; glycerophospholipid metabolism. Its function is as follows. Is involved in the reduction of 2,3-digeranylgeranylglycerophospholipids (unsaturated archaeols) into 2,3-diphytanylglycerophospholipids (saturated archaeols) in the biosynthesis of archaeal membrane lipids. Catalyzes the formation of archaetidic acid (2,3-di-O-phytanyl-sn-glyceryl phosphate) from 2,3-di-O-geranylgeranylglyceryl phosphate (DGGGP) via the hydrogenation of each double bond of the isoprenoid chains. Is also probably able to reduce double bonds of geranyl groups in CDP-2,3-bis-O-(geranylgeranyl)-sn-glycerol and archaetidylserine, thus acting at various stages in the biosynthesis of archaeal membrane lipids. The protein is Digeranylgeranylglycerophospholipid reductase of Methanosphaerula palustris (strain ATCC BAA-1556 / DSM 19958 / E1-9c).